A 409-amino-acid chain; its full sequence is Nucleoprotein (409 aa).

Disordered stretches follow at residues 1 to 32 (MASG…SSGN), 46 to 68 (IPPP…SQQH), 164 to 196 (RSGR…EDDL), and 238 to 258 (VDQV…DDKM). Residues 15 to 31 (PVIKLGGPKPPKVGSSG) show a composition bias toward low complexity. The interval 29–160 (SSGNASWFQA…GNFRWDFIPL (132 aa)) is RNA-binding. One can recognise a CoV N NTD domain in the interval 31 to 156 (GNASWFQAIK…GGPDGNFRWD (126 aa)). Positions 166 to 179 (GRSTAASSAASSRA) are enriched in low complexity. 2 stretches are compositionally biased toward basic and acidic residues: residues 180-192 (PSRE…RSGS) and 247-258 (KGKEGNFGDDKM). Phosphoserine; by host is present on residues Ser-190 and Ser-192. The CoV N CTD domain maps to 215-331 (TKAKADEMAH…QCVDGVGTRP (117 aa)). Residues 226–333 (RYCKRTIPPN…VDGVGTRPKD (108 aa)) form a dimerization region. A disulfide bridge connects residues Cys-320 and Cys-323. The disordered stretch occupies residues 326 to 409 (GVGTRPKDDE…GDAALGENEL (84 aa)). Over residues 358–367 (QRPKKEKKPK) the composition is skewed to basic residues. Residues 368–384 (KHDDEVDKALTSDEERN) show a composition bias toward basic and acidic residues. Phosphothreonine; by host is present on Thr-378. Position 379 is a phosphoserine; by host (Ser-379).

It belongs to the gammacoronavirus nucleocapsid protein family. In terms of assembly, homooligomer. Both monomeric and oligomeric forms interact with RNA. Interacts with protein M. Interacts with NSP3; this interaction serves to tether the genome to the newly translated replicase-transcriptase complex at a very early stage of infection. ADP-ribosylated. The ADP-ribosylation is retained in the virion during infection. In terms of processing, phosphorylated on serine and threonine residues.

The protein resides in the virion. It is found in the host endoplasmic reticulum-Golgi intermediate compartment. It localises to the host Golgi apparatus. Packages the positive strand viral genome RNA into a helical ribonucleocapsid (RNP) and plays a fundamental role during virion assembly through its interactions with the viral genome and membrane protein M. Plays an important role in enhancing the efficiency of subgenomic viral RNA transcription as well as viral replication. In Avian infectious bronchitis virus (strain M41) (IBV), this protein is Nucleoprotein.